The chain runs to 65 residues: Large ribosomal subunit protein bL33c (65 aa).

This sequence belongs to the bacterial ribosomal protein bL33 family.

It is found in the plastid. Its subcellular location is the chloroplast. The chain is Large ribosomal subunit protein bL33c from Psilotum nudum (Whisk fern).